The following is a 143-amino-acid chain: 18 kDa heat shock protein (143 aa).

One can recognise a sHSP domain in the interval 23-135 (TWSRPTAMPM…KRRRVKVGQG (113 aa)).

This sequence belongs to the small heat shock protein (HSP20) family.

This is 18 kDa heat shock protein (hsp18) from Streptomyces albus G.